We begin with the raw amino-acid sequence, 291 residues long: ATP synthase gamma chain (291 aa).

The protein belongs to the ATPase gamma chain family. In terms of assembly, F-type ATPases have 2 components, CF(1) - the catalytic core - and CF(0) - the membrane proton channel. CF(1) has five subunits: alpha(3), beta(3), gamma(1), delta(1), epsilon(1). CF(0) has three main subunits: a, b and c.

It localises to the cell inner membrane. Functionally, produces ATP from ADP in the presence of a proton gradient across the membrane. The gamma chain is believed to be important in regulating ATPase activity and the flow of protons through the CF(0) complex. The chain is ATP synthase gamma chain from Ralstonia nicotianae (strain ATCC BAA-1114 / GMI1000) (Ralstonia solanacearum).